The sequence spans 112 residues: uncharacterized protein (112 aa).

Residues 75–95 traverse the membrane as a helical segment; that stretch reads ILGVFGGFIYILTPLPIVSGF.

Its subcellular location is the membrane. This is an uncharacterized protein from Methanocaldococcus jannaschii (strain ATCC 43067 / DSM 2661 / JAL-1 / JCM 10045 / NBRC 100440) (Methanococcus jannaschii).